Consider the following 263-residue polypeptide: Putative steroid dehydrogenase 4 (263 aa).

The Proton acceptor role is filled by Tyr-154.

This sequence belongs to the short-chain dehydrogenases/reductases (SDR) family. 17-beta-HSD 3 subfamily.

This chain is Putative steroid dehydrogenase 4 (stdh-4), found in Caenorhabditis elegans.